A 469-amino-acid chain; its full sequence is Crinkler effector protein 1 (469 aa).

An N-terminal signal peptide occupies residues 1 to 17 (MSITLLCLIKGNTLANA). The LQLFLAK-like domain stretch occupies residues 18 to 57 (FPVDIDKDQLVGHLKKVIKAEQPQTFANVDAKDLKLWRVP). Positions 58–96 (ISDDHDDQLRNLSLEDSDELLAIRKISKYFPDSPPEECI) are DWL domain. Asn68 carries N-linked (GlcNAc...) asparagine glycosylation. Positions 97–103 (HVLVEPP) match the HVLVXXP motif motif. Residues Asn126, Asn181, and Asn248 are each glycosylated (N-linked (GlcNAc...) asparagine).

It belongs to the Crinkler effector family. As to quaternary structure, homodimer.

It localises to the secreted. It is found in the host nucleus. Functionally, effector that participates in the arbuscule development step of the symbiosis. Arbuscular mycorrhizal (AM) symbiosis is one of the most prominent and beneficial plant-microbe interactions that facilitates mineral nutrition and confers tolerance to biotic and abiotic stresses. Is not involved in cell death processes. This chain is Crinkler effector protein 1, found in Rhizophagus irregularis (strain DAOM 181602 / DAOM 197198 / MUCL 43194) (Arbuscular mycorrhizal fungus).